We begin with the raw amino-acid sequence, 143 residues long: Transcriptional regulator MraZ (143 aa).

SpoVT-AbrB domains are found at residues 5 to 47 (TYTP…PREE) and 76 to 119 (TDEQ…DAQA).

The protein belongs to the MraZ family. As to quaternary structure, forms oligomers.

Its subcellular location is the cytoplasm. The protein resides in the nucleoid. In Rhodococcus jostii (strain RHA1), this protein is Transcriptional regulator MraZ.